Reading from the N-terminus, the 505-residue chain is Methylmalonyl-CoA carboxyltransferase 5S subunit (505 aa).

One can recognise a Pyruvate carboxyltransferase domain in the interval 14-276; that stretch reads VGITELVLRD…TTNLDYDRLH (263 aa). Substrate is bound by residues 22–26, Ala-59, and Lys-184; that span reads RDAHQ. Asp-23 contributes to the Co(2+) binding site. Lys-184, His-215, and His-217 together coordinate Co(2+). Lys-184 carries the N6-carboxylysine; partial modification.

As to quaternary structure, homodimer. Transcarboxylase is composed of three subunits: 1.3S, 5S, and 12S. The core of the enzyme is composed of six 12S subunits. On each side of the core there are three pairs of 5S subunits. Each 5S dimer is attached to the core by two 1.3S subunits. Thus the total number of chains is 30 (6 + 12 + 12). Requires Co(2+) as cofactor. Lys-184 is carboxylated in the free enzyme and helps to coordinate the cobalt ion. Lys-184 is partially carboxylated in the complex with pyruvate, but is not carboxylated in the oxaloacetate-bound form.

It carries out the reaction (S)-methylmalonyl-CoA + pyruvate = propanoyl-CoA + oxaloacetate. Its function is as follows. The 5S subunit specifically catalyzes the transfer of the carboxyl group from biotin of the 1.3S subunit to pyruvate to form oxaloacetate and 1.3S biotin. In Propionibacterium freudenreichii subsp. shermanii, this protein is Methylmalonyl-CoA carboxyltransferase 5S subunit.